The sequence spans 511 residues: 2-isopropylmalate synthase (511 aa).

Positions 5–267 constitute a Pyruvate carboxyltransferase domain; that stretch reads LIIFDTTLRD…DTDINATHIL (263 aa). Residues D14, H202, H204, and N238 each coordinate Mn(2+). The tract at residues 392 to 511 is regulatory domain; the sequence is KLVSLKVCTE…ATNKAQHPQI (120 aa).

This sequence belongs to the alpha-IPM synthase/homocitrate synthase family. LeuA type 1 subfamily. As to quaternary structure, homodimer. It depends on Mn(2+) as a cofactor.

The protein resides in the cytoplasm. It carries out the reaction 3-methyl-2-oxobutanoate + acetyl-CoA + H2O = (2S)-2-isopropylmalate + CoA + H(+). It functions in the pathway amino-acid biosynthesis; L-leucine biosynthesis; L-leucine from 3-methyl-2-oxobutanoate: step 1/4. Functionally, catalyzes the condensation of the acetyl group of acetyl-CoA with 3-methyl-2-oxobutanoate (2-ketoisovalerate) to form 3-carboxy-3-hydroxy-4-methylpentanoate (2-isopropylmalate). The chain is 2-isopropylmalate synthase from Ruthia magnifica subsp. Calyptogena magnifica.